Consider the following 395-residue polypeptide: Protein-arginine rhamnosyltransferase (395 aa).

Residues 19 to 22, Tyr-205, Gln-272, and 288 to 292 each bind dTDP-beta-L-rhamnose; these read NYGD and RGEDS. Asp-22 acts as the Proton acceptor in catalysis. Glu-290 is an active-site residue.

This sequence belongs to the glycosyltransferase 104 family.

The enzyme catalyses dTDP-beta-L-rhamnose + L-arginyl-[protein] = N(omega)-(alpha-L-rhamnosyl)-L-arginyl-[protein] + dTDP + H(+). Functionally, protein-arginine rhamnosyltransferase that catalyzes the transfer of a single rhamnose to elongation factor P (EF-P) on 'Lys-32', a modification required for EF-P-dependent rescue of polyproline stalled ribosomes. The sequence is that of Protein-arginine rhamnosyltransferase from Shewanella oneidensis (strain ATCC 700550 / JCM 31522 / CIP 106686 / LMG 19005 / NCIMB 14063 / MR-1).